A 5073-amino-acid polypeptide reads, in one-letter code: MSRFSCIFPTLTDGYIPKPDHTCAAGRRTYTIDLSGWKAPGSETESHILAAWGLVLSSYVGTDEVAFYVVPTTGPDTTALADLKVEGDMSRQSLTYAAMQLLHPALVGAGQVSGETANTIITFAKDIESLFVTQTEAANVGTAMAQALAEVGTCDNDRIIKDLNLMSPAHLEHIWRFNANVPGIWEECFHDVIERHATNRPHSLAVDAWDTKLTYADLVREARLLAAYLQQRGVGPGSVVPISFERSGAALVAMLAVSKAGSAFVSVPPNLPAGRLDAILDVIEAPFVVTWTKYESFWAERLPTLPIDNYPKPAADATVEALGKPEDLFYVIFTSGSTGRPKGCMLSHSNWLNGALRNAPSWKYGPESRVLQMLSHTFDMSLLEICTSLGSGACVCVPRTEEIETSISDAINRWQVNHVIMTPSLARALRPDDVPGLKTMCLGGEAFPKEIVTMWSERINLWQFYGPSECSINSSSRPITRPDADPLNIGPPNSAACWVTDVHDYNKLVPVGAIGELLVSGPIVGMGYLKNPVKTAEAFLEEVGFVAKDDPQFGGFRFYRTGDLVRWNSDGTITFCGRADTQVKLNGQRLELAEVEYQLGLESGVQYAIAMAPQAGLCKNNLIAILTVKGTSTGNQDTAADEIPLLDRRDPIVQETVKRLRSQLQHALPRYMVPTIWAFVGRMPMSASGKIDRVQLRDWVQKMSQETFDAITGRSLEAEDHVLGLSRLEQEVQLAWAEALGLSAAEVGLQQPFVALGGDSIMALDAVARCRARQIKISMVHILSCEGVREAASLAEVQETPAQQVAEMAVDYSNLWTRLSDDYDLDKLGVTQLEEVEDVFPCTTMQEGMFLGQIRRPGAYHMRFFHRVQLKGGCLPTVERIQQAWASLVERHPSLRTVFVDDLSPEAIYHSIVLRSVPMELRMREVPRDLRAEAALAMFTEELVPFRANAPLHRMLLLTCRGRVPYFMLEISHVIMDGYALSVFRREFIRACSSSAPLPRGPDYRMFANYHRTRQTDDSARYWTNYLADCVPCHIPTHAVSAPSDGPPEWPRTLQRRDFGFDNSAAFLQRCKERQVTLACAIRAAWALVLRAYTQSQDVCFGYVSSGRNVPVPEVETIFGLCLSMQVCRARLSEASTIASIAKKIQEDYVASLPFQHYPLAEAQRGLKQTHGQGLFNTAISMEWVPPSAEDEDALLDLEEIREQDDPTEYDIAISVDVHEGHIKLGFLYWPNLTDFEITHLAEALQGAMNCFVFQPDEALNTLSLLQASDVCSALADGPTLLPLEAVRGNVVSMIDRWVTRHPEGAAIDGWDGSLTYKELHEQSSWVARNLLHQGVQLGDRILVCADRSSRTVATVLGIVRAGCVLVLSNPTDPAKRLQWLAKRCNAALIVADPTYEERFATADARVLSTTSVCAPAAWDYEFPALDEHDLISILFTSGSTGTPKGILMEHGALATSVLLGHGRTLRFSRHTRMLHFASLTFDAALAEIFTTLAHGGCICVPCEEDRLSDVPGCISRFAVNMAMLTPSVGRLLEPGALPTLKSLIMVGEPMSRLDVERFAPVLDLYNGAGPTETSIMVTIAGPMKPTDEPVDLGYAVAGVRLWVTEAENPNRLAPLGAVGELVVEGRLVTRGYLDDPARTHEAFLPSLPWLPSQHALYRTGDLVRYADDGSLRYMGRKDTQVKLRGQRIELQEVEYHLRKSLQQAQIVVEMVVPAGKMRAQASLVAFVSGLTAADVESSSACNLEGMIPISQIVLPKSAFKALEEALPRHMIPSVYYALDTIPLSVNGKADRRRLREMGSLLLASSAAHKNTIEGMSKSVKWTPASELERTLLELMAATLGLEAETMHGDDSFFELGGDSVSAMKLVATARDKYKLSLSVPQMFRYPTICQLAAEVGEPAGQSASSASSTTEEGFTFSTPDDSSTNDGVDDDFLQLATAQLAQLAQEKGKKVDIAALLKQLQGGSSSNKTPSVSSSSSSSSSSKRKKKAALAEAAAPISVQFSLLDGGADVLDKVRAQAVEHCKIPHEDIEDIYPATALQEGMIALTARTPGVYTTTLTCDLSEQVDLARLHYAWGKAAEAHPILRTRIILTDNNTAVQVVQRAKGLPWDTYSLREGDVLPDLTSNMTSGSPLLRLAVVHRQNQPRMLLVAIHHALYDGWSMPLLKEAVEDAYHGRDLRPQPFTPFIKHLIAGKVAAQAFWTTHLDSFAGGVFPNLPGVDHQVQPKERRTRSLTMPTATPRAQYTMATKIQAAWAVTVSRYAEDNDVVFGSVSTGRSAPVPAIDRMVGPTITTVPVRISLGDQAERLTSLLQRVQDDSWERMDHEHLGLQHIRRLGESAAAACGFQTLLVIQPREQPNNKYRSTLLSSLQDVAELEGVDTYPLMLVCEPDGARLHLSAVFDPVVLDGVTLERMLANWELVLTQLWNEPDMAVLELDAVSCSDTETLIRWNTGETIADGCAHDAVCEWSSRTPHAPAVCAWDGEWTYEELERCSSLVASQILAHDVSSGDFIALYHEKSRWAAAGILAVFKAGAILITLDPAHPTDRIKNILDQARPRLILTSQSLLDVARNLETPALSVQFAASQPLPEGWSSLPTISSTQAAYAPFTSGSTGRPKGIPLDHRGLAASTASIAHSCLLRPASRVLHFASFAFDASMMEHLIAWRAGGCLCIPDETARQTDLAKCIRDFNVTWAFLTPSCLRLITPDDVPSLQALGLGGESMTSEDIAIWSPRLRQIVQLYGPAECCIVAALTEVTKPSENRLIGRPNACRCWVVDLQNPDRLAPIGAVGELLIEGITVGRGYINDPDRTTPVFIRPPKWLQTLYPDDQEPKRLYRTGDLVRYADVDGKLAFIGRRDGQLKLHGQRIELADIEAHLRPLIPATQKMAVEMLHSADNQNLILAAFLEEMSTSQKPTEREVKLLHPSQSQCALNVMAIDSALSRKVPQYMIPSMYLHISRLPLSASGKLDRRHLREMIAELPRQRLNEYAAGSGLRVPDRPKTSQEQEMQAIWARVLSLDPNTIGVNDDFFRIGGDSISGMQVATKCNAAGIHITSADLFRHRTIEQLICHLNSIRTTDCASVSLPAEPVDEWVALAPIQQLFFEVAPEGPNHFNQSLLLRTSRRVSVEELAGGLDILVGRHSMLRARFCRKDSGQWFQQVKSLGSEPASNFYRLAAHNQITRESLPTLFTTAQMALSIQDGPLLTVDLVELEDGRQLVYLAAHHLIIDLVSWRILHGELEEYLQTDSLSSATGSVPFITWSQLQAEYSAEHLTPARAFPGFQEANDDFDVMRYWGISSESNTFGQTSISRFTLDRTVTDILFGSANKVMDTRPVEILQAALWYSCNQALTDRPGPSIYVEGHGREPWTDAINVSGTVGWFTTMSPLVSTPWDHLSRTSMRDFVDALSYIKDQRRRIPANGWAYFTSRYLNDEGRVAYGRTKPVVEVLFNYMGQYQEMNREGAMLQLAGNDIQSGTGASDIADNVPRFSLIDVSAFTANGCLTFEFTFPQLMQQDARLEQCIKECERTLVAAASSLSAEGPRKTLTDFPLMSALTYDQLSQFLDHTLPSLGLRAQDVLDIYPCSPVQQGMLLAQLRDRQAYQQRFRFQVMSRVPTDQLPLEKVKGAWTEVINRHDILRTLLLPVSDHSHFDQVVMVPGSLQHLVRLNAMDTNPADGLPHTINITSDSADTIICEWKVSHALVDAMSIAVIQREVNQAFEGSLGQYRDVPQYVDYIKWLSLQDNTEAQAYWQNHLKEVEPCLFPQLTSSPNPINPEGTISAIRATWTRDARMDDLCHKHAITLTNLFQIVWAVVLGAYVGTDEVCFGYTTLGRDVPVDGVETMVGPLVNVLAATVQLKQDESILNALLTHQNRLTSSLQHQHYALADVYACLGLAGSQLFNTIVSLQDISHFDVPDERGTRLEMLPANDVSEYNVALNIGVDKSSIQLVCSYQTVSLSAEQADALLRTVFHVLGEILRDPTQRFCELEVISPKCKEQLVKWNAGMLAPTDEYIHEKIQGQCRIHASRQAVCAWDGMFTYAEVDDLSSRLAARLIRMGVTSEDIIPIYSPKSRWTVIAILGVLKAGAAFTLLETSHPMARLHMICNQIKAPMIIAPASHAVPAANLAPILVVLDNITSLAQEKLDPFPGIGIPPAGEALAYLIFTSGSTGNPKGVMVTHQNLCSNASIITTSVNMTSDSRVLQFASHAFDGCLWEILGALLAGACLIIPSESENKEDLTGCIERMDVTWAFLTPSVARILKPETLPSLCNLVLGGEPIAASDLDMWRGHVQVVCAYGPTETTILASTTSPSTFPTDGKDIGTPTGSSLWIVDTRNYQTMVPLGATGELLIEGPNVSQGYLGDPEKTNDAFPDAPRWLSQLRKSPTRVYRTGDLVRFDTTAGTIRFVGRKDNQIKFHGQRIELGEIEHHAQLAFSSASTVIVDLITPEQPQQPYIVAFVHLPDATPETTETMDTILLPPSESFRADALAAQKKMHKRLPHYMVPAAFLPLHRFPLSATGKADRKRLRQCALGLSSPDLSAYRATASTKRMPSTAAERKMQLLVASVLGRDPTEIGMDDSFFYLGGDSVQAMRLVAEGRQQGLSLSLRAIFDSPRLRDLGDQARSPNADNQRVSTASSAGLRDNRDQIDKVVATNSLKKADVADVLPTTSFQRHWLDAQLKSYIVVDIPGPIDPARLLRAMHRVVEAHPILRVSFVPYETTTLQIILRTAAAMTNVDVSTTTVDFSTTTVEDICRQDAGAQLPPGVPYLRVILATQDKADHKLIMRLSHAQYDAVSLSLLMNDLSHAYATETHALPSSHFPRFNDYITYQQAQRADPTATTFWRLLLQNVSLTYLNLQPAESSASNGTPITLSRDINIATFPSLPNGITIATMVKAAWSLVLAQKTDSHAVIFGQVVHGRTIALPGVEGIVGPCANITPVVARLGLQTTGFELMQTLQDQHRSAMPYEALDLDDALAYTKNSPVGRRGLQTIVQHQNNVMVDDMELLLGEVKCGVDVRAVDHVPKEVWVYSSVDEKRPDMLEVKIMSSTLALGEEVAEELMGLLVEKIVGLLRHPERVCV.

The adenylation 1 stretch occupies residues 194–585 (ERHATNRPHS…CGRADTQVKL (392 aa)). In terms of domain architecture, Carrier 1 spans 726–799 (SRLEQEVQLA…EAASLAEVQE (74 aa)). Serine 760 is subject to O-(pantetheine 4'-phosphoryl)serine. The interval 837–1268 (EDVFPCTTMQ…ALNTLSLLQA (432 aa)) is condensation 1. The interval 1296–1685 (DRWVTRHPEG…GRKDTQVKLR (390 aa)) is adenylation 2. The 78-residue stretch at 1823–1900 (TPASELERTL…QLAAEVGEPA (78 aa)) folds into the Carrier 2 domain. Serine 1860 carries the O-(pantetheine 4'-phosphoryl)serine modification. Disordered stretches follow at residues 1901–1930 (GQSA…DGVD) and 1963–1984 (GGSS…SSSK). Low complexity-rich tracts occupy residues 1903-1927 (SASS…STND) and 1965-1982 (SSSN…SSSS). Residues 2031–2446 (EDIYPATALQ…AVSCSDTETL (416 aa)) form a condensation 2 region. The adenylation 3 stretch occupies residues 2469 to 2861 (SRTPHAPAVC…IGRRDGQLKL (393 aa)). Positions 2997–3073 (RPKTSQEQEM…QLICHLNSIR (77 aa)) constitute a Carrier 3 domain. The residue at position 3034 (serine 3034) is an O-(pantetheine 4'-phosphoryl)serine. 2 condensation regions span residues 3090-3555 (WVAL…TYDQ) and 3576-3995 (DIYP…EQLV). Positions 4020-4410 (HASRQAVCAW…VGRKDNQIKF (391 aa)) are adenylation 4. Residues 4544–4620 (MPSTAAERKM…DLGDQARSPN (77 aa)) form the Carrier 4 domain. An O-(pantetheine 4'-phosphoryl)serine modification is found at serine 4581. Positions 4611 to 4633 (DLGDQARSPNADNQRVSTASSAG) are disordered. Over residues 4617-4631 (RSPNADNQRVSTASS) the composition is skewed to polar residues. The tract at residues 4657 to 4991 (DVLPTTSFQR…LQTIVQHQNN (335 aa)) is condensation 5.

It belongs to the NRP synthetase family.

It functions in the pathway secondary metabolite biosynthesis. Its function is as follows. Nonribosomal peptide synthetase; part of the gene cluster that mediates the biosynthesis of malformins, cyclic pentapeptides with a disulfide bond between 2 consecutive cysteins, that show potential anti-tumor as well as antimalarial and antitrypanosomal properties. The nonribosomal peptide synthetase mlfA is responsible of the formation of the cyclic pentapeptide. The malformin biosynthesis clusters in malformin-producing fungi also contain enzymes involved in the formation of the disulfide bond between the two consecutive cysteins within malformins, in addition to additional tailoring enzymes such as methyltransferases or oxidoreductases. They are also composed of up to 4 major facilitator superfamily transporters, and transcription factors probably involved in the regulation of the expression of those clusters. The chain is Malformin synthetase mlfA from Aspergillus tubingensis (strain CBS 134.48).